Reading from the N-terminus, the 545-residue chain is Membrane protein insertase YidC (545 aa).

A run of 4 helical transmembrane segments spans residues 350–370 (IIGN…AVLY), 424–444 (LPML…FASV), 461–481 (ADPY…QTYL), and 498–518 (PLVF…YWVV).

This sequence belongs to the OXA1/ALB3/YidC family. Type 1 subfamily. Interacts with the Sec translocase complex via SecD. Specifically interacts with transmembrane segments of nascent integral membrane proteins during membrane integration.

Its subcellular location is the cell inner membrane. Required for the insertion and/or proper folding and/or complex formation of integral membrane proteins into the membrane. Involved in integration of membrane proteins that insert both dependently and independently of the Sec translocase complex, as well as at least some lipoproteins. Aids folding of multispanning membrane proteins. The chain is Membrane protein insertase YidC from Neisseria meningitidis serogroup B (strain ATCC BAA-335 / MC58).